We begin with the raw amino-acid sequence, 539 residues long: Chaperonin GroEL (539 aa).

ATP is bound by residues 29–32 (TLGP), 86–90 (DGTTT), Gly-413, 477–479 (DAL), and Asp-493.

The protein belongs to the chaperonin (HSP60) family. As to quaternary structure, forms a cylinder of 14 subunits composed of two heptameric rings stacked back-to-back. Interacts with the co-chaperonin GroES.

The protein resides in the cytoplasm. It carries out the reaction ATP + H2O + a folded polypeptide = ADP + phosphate + an unfolded polypeptide.. In terms of biological role, together with its co-chaperonin GroES, plays an essential role in assisting protein folding. The GroEL-GroES system forms a nano-cage that allows encapsulation of the non-native substrate proteins and provides a physical environment optimized to promote and accelerate protein folding. This chain is Chaperonin GroEL, found in Clostridium perfringens (strain 13 / Type A).